The following is a 101-amino-acid chain: Urease subunit beta (101 aa).

This sequence belongs to the urease beta subunit family. In terms of assembly, heterotrimer of UreA (gamma), UreB (beta) and UreC (alpha) subunits. Three heterotrimers associate to form the active enzyme.

It localises to the cytoplasm. The catalysed reaction is urea + 2 H2O + H(+) = hydrogencarbonate + 2 NH4(+). The protein operates within nitrogen metabolism; urea degradation; CO(2) and NH(3) from urea (urease route): step 1/1. The polypeptide is Urease subunit beta (Nostoc punctiforme (strain ATCC 29133 / PCC 73102)).